We begin with the raw amino-acid sequence, 317 residues long: Putative 2-hydroxyacid dehydrogenase SE_1879 (317 aa).

NAD(+) contacts are provided by residues 155–156, 234–236, and aspartate 260; these read EI and AGR. Arginine 236 is a catalytic residue. Residue glutamate 265 is part of the active site. The active-site Proton donor is the histidine 283. NAD(+) is bound at residue 283–286; the sequence is HIGN.

It belongs to the D-isomer specific 2-hydroxyacid dehydrogenase family.

In Staphylococcus epidermidis (strain ATCC 12228 / FDA PCI 1200), this protein is Putative 2-hydroxyacid dehydrogenase SE_1879.